A 152-amino-acid polypeptide reads, in one-letter code: Endoribonuclease YbeY (152 aa).

The Zn(2+) site is built by histidine 116, histidine 120, and histidine 126.

Belongs to the endoribonuclease YbeY family. It depends on Zn(2+) as a cofactor.

The protein resides in the cytoplasm. Single strand-specific metallo-endoribonuclease involved in late-stage 70S ribosome quality control and in maturation of the 3' terminus of the 16S rRNA. This Mycoplasma mobile (strain ATCC 43663 / 163K / NCTC 11711) (Mesomycoplasma mobile) protein is Endoribonuclease YbeY.